The sequence spans 671 residues: NADPH--cytochrome P450 reductase (671 aa).

Topologically, residues 1-14 (MSAEHVEEVVSEEP) are lumenal. The helical transmembrane segment at 15–35 (FLGTLDIALLVVLLVGATWYF) threads the bilayer. The Cytoplasmic portion of the chain corresponds to 36–671 (MRSRKKEEAP…QKRYSADVWS (636 aa)). The region spanning 77 to 221 (LVVFYGSQTG…DFITWKDRFW (145 aa)) is the Flavodoxin-like domain. Residues 83 to 88 (SQTGTA), 135 to 138 (ATYG), 170 to 179 (LGNKTYEHYN), and D205 each bind FMN. An FAD-binding FR-type domain is found at 276–515 (KNPFLASVIV…FIRKSQFRLP (240 aa)). Position 295 (R295) interacts with NADP(+). FAD-binding positions include 451-454 (RYYS), 469-471 (TAV), Y475, and 485-488 (GVAT). NADP(+)-binding positions include T529, 589–590 (SR), 595–599 (KIYVT), and D632. Residue W670 coordinates FAD.

It belongs to the NADPH--cytochrome P450 reductase family. This sequence in the N-terminal section; belongs to the flavodoxin family. In the C-terminal section; belongs to the flavoprotein pyridine nucleotide cytochrome reductase family. FAD is required as a cofactor. Requires FMN as cofactor.

The protein resides in the endoplasmic reticulum membrane. It catalyses the reaction 2 oxidized [cytochrome P450] + NADPH = 2 reduced [cytochrome P450] + NADP(+) + H(+). Functionally, this enzyme is required for electron transfer from NADP to cytochrome P450 in microsomes. It can also provide electron transfer to heme oxygenase and cytochrome B5. In Musca domestica (House fly), this protein is NADPH--cytochrome P450 reductase.